The chain runs to 513 residues: Ribonuclease Y (513 aa).

A helical transmembrane segment spans residues 6–26 (YIIIAVVIIIICVILGLYVVD). Residues 35–59 (EASKEARRLKEEAERDAEAKKKEAI) are disordered. The 86-residue stretch at 203–288 (TVHVVNLPND…EMVEKAKKEV (86 aa)) folds into the KH domain. The HD domain maps to 329–422 (VLKHSIEVSH…VQAADAISAA (94 aa)).

Belongs to the RNase Y family.

It localises to the cell membrane. Its function is as follows. Endoribonuclease that initiates mRNA decay. The chain is Ribonuclease Y from Clostridium botulinum (strain Okra / Type B1).